The following is a 265-amino-acid chain: 4-hydroxy-tetrahydrodipicolinate reductase (265 aa).

NAD(+) contacts are provided by residues 9 to 14 (GALGRM), 100 to 102 (GTT), and 124 to 127 (SPNM). Histidine 158 serves as the catalytic Proton donor/acceptor. Residue histidine 159 coordinates (S)-2,3,4,5-tetrahydrodipicolinate. The active-site Proton donor is lysine 162. Residue 168–169 (GT) coordinates (S)-2,3,4,5-tetrahydrodipicolinate.

This sequence belongs to the DapB family.

The protein localises to the cytoplasm. The catalysed reaction is (S)-2,3,4,5-tetrahydrodipicolinate + NAD(+) + H2O = (2S,4S)-4-hydroxy-2,3,4,5-tetrahydrodipicolinate + NADH + H(+). It carries out the reaction (S)-2,3,4,5-tetrahydrodipicolinate + NADP(+) + H2O = (2S,4S)-4-hydroxy-2,3,4,5-tetrahydrodipicolinate + NADPH + H(+). It participates in amino-acid biosynthesis; L-lysine biosynthesis via DAP pathway; (S)-tetrahydrodipicolinate from L-aspartate: step 4/4. Its function is as follows. Catalyzes the conversion of 4-hydroxy-tetrahydrodipicolinate (HTPA) to tetrahydrodipicolinate. The protein is 4-hydroxy-tetrahydrodipicolinate reductase of Aquifex aeolicus (strain VF5).